The primary structure comprises 153 residues: Large ribosomal subunit protein uL30 (153 aa).

Belongs to the universal ribosomal protein uL30 family. As to quaternary structure, part of the 50S ribosomal subunit.

This chain is Large ribosomal subunit protein uL30, found in Methanoculleus marisnigri (strain ATCC 35101 / DSM 1498 / JR1).